The chain runs to 106 residues: Protamine (106 aa).

Positions 1–106 (ARAVRRRRAR…TRRRRRRARR (106 aa)) are disordered.

As to expression, sperm.

Its subcellular location is the nucleus. The protein resides in the chromosome. This Phorcus turbinatus (Sea snail) protein is Protamine.